The sequence spans 332 residues: Ribosomal RNA small subunit methyltransferase H (332 aa).

S-adenosyl-L-methionine is bound by residues 38 to 40, D56, F83, D104, and Q111; that span reads GGY. Positions 309 to 332 are disordered; the sequence is TETPFSEDISRPDTHIPRSRRQSA.

This sequence belongs to the methyltransferase superfamily. RsmH family.

The protein localises to the cytoplasm. It carries out the reaction cytidine(1402) in 16S rRNA + S-adenosyl-L-methionine = N(4)-methylcytidine(1402) in 16S rRNA + S-adenosyl-L-homocysteine + H(+). Functionally, specifically methylates the N4 position of cytidine in position 1402 (C1402) of 16S rRNA. The sequence is that of Ribosomal RNA small subunit methyltransferase H from Zymomonas mobilis subsp. mobilis (strain ATCC 31821 / ZM4 / CP4).